An 82-amino-acid chain; its full sequence is Small, acid-soluble spore protein gamma-type (82 aa).

Polar residues-rich tracts occupy residues 1-24 and 32-50; these read MANS…ASGQ and ASET…SAAG. Positions 1-82 are disordered; that stretch reads MANSNNKTNA…SAEQNKQQNS (82 aa). 2 repeats span residues 19–45 and 46–72; these read QSAS…KQNQ and QSAA…QQNQ. The span at 69–82 shows a compositional bias: low complexity; that stretch reads QQNQSAEQNKQQNS.

Belongs to the gamma-type SASP family.

Its function is as follows. SASP are bound to spore DNA. They are double-stranded DNA-binding proteins that cause DNA to change to an a-like conformation. They protect the DNA backbone from chemical and enzymatic cleavage and are thus involved in dormant spore's high resistance to UV light. The polypeptide is Small, acid-soluble spore protein gamma-type (Bacillus subtilis).